The primary structure comprises 938 residues: Isoleucine--tRNA ligase (938 aa).

Positions 58 to 68 (PYANGHLHMGH) match the 'HIGH' region motif. Glutamate 566 contacts L-isoleucyl-5'-AMP. The 'KMSKS' region signature appears at 607 to 611 (KMSKS). Lysine 610 contacts ATP. Cysteine 906, cysteine 909, cysteine 926, and cysteine 929 together coordinate Zn(2+).

This sequence belongs to the class-I aminoacyl-tRNA synthetase family. IleS type 1 subfamily. Monomer. Zn(2+) serves as cofactor.

The protein resides in the cytoplasm. The enzyme catalyses tRNA(Ile) + L-isoleucine + ATP = L-isoleucyl-tRNA(Ile) + AMP + diphosphate. Its function is as follows. Catalyzes the attachment of isoleucine to tRNA(Ile). As IleRS can inadvertently accommodate and process structurally similar amino acids such as valine, to avoid such errors it has two additional distinct tRNA(Ile)-dependent editing activities. One activity is designated as 'pretransfer' editing and involves the hydrolysis of activated Val-AMP. The other activity is designated 'posttransfer' editing and involves deacylation of mischarged Val-tRNA(Ile). The protein is Isoleucine--tRNA ligase of Desulfovibrio desulfuricans (strain ATCC 27774 / DSM 6949 / MB).